The sequence spans 91 residues: Alpha-defensin-related sequence 10 (91 aa).

Residues 1–19 form the signal peptide; the sequence is MKKLVLLSAFVLLAFQVQA. Residues 20–65 constitute a propeptide that is removed on maturation; the sequence is DSIQNTDEETKTEEQPGEENQAMSVSFGDPEGSALQDAAVGMARPC. Residues 21–52 are disordered; the sequence is SIQNTDEETKTEEQPGEENQAMSVSFGDPEGS. 7 tandem repeats follow at residues 65–67, 68–70, 71–73, 74–76, 77–79, 80–82, and 83–85. Residues 65-85 form a 7 X 3 AA tandem repeats of C-P-X region; sequence CPPCPSCPSCPWCPMCPRCPS.

The protein belongs to the alpha-defensin family. In terms of tissue distribution, paneth cells of the small bowel.

It is found in the secreted. In terms of biological role, apparent precursor of a secreted, cationic, proline- and cysteine-rich peptide that contains Cys-Pro-Xaa repeats. Unlike cryptdin, the proposed mature peptide region lacks the structural motif characteristic of defensins. It may have microbicidal activities. This is Alpha-defensin-related sequence 10 (Defa-rs10) from Mus musculus (Mouse).